The primary structure comprises 528 residues: Peptide chain release factor 3 (528 aa).

The tr-type G domain maps to 11-279 (NKRRTFAIIS…GIVEWAPKPL (269 aa)). GTP is bound by residues 20–27 (SHPDAGKT), 88–92 (DTPGH), and 142–145 (NKLD).

Belongs to the TRAFAC class translation factor GTPase superfamily. Classic translation factor GTPase family. PrfC subfamily.

Its subcellular location is the cytoplasm. In terms of biological role, increases the formation of ribosomal termination complexes and stimulates activities of RF-1 and RF-2. It binds guanine nucleotides and has strong preference for UGA stop codons. It may interact directly with the ribosome. The stimulation of RF-1 and RF-2 is significantly reduced by GTP and GDP, but not by GMP. This is Peptide chain release factor 3 from Shewanella sp. (strain W3-18-1).